A 385-amino-acid chain; its full sequence is Cell division protein FtsZ (385 aa).

GTP is bound by residues 37–41 (GGGSN), 125–127 (GTG), E156, K160, and D204.

It belongs to the FtsZ family. Homodimer. Polymerizes to form a dynamic ring structure in a strictly GTP-dependent manner. Interacts directly with several other division proteins.

It localises to the cytoplasm. In terms of biological role, essential cell division protein that forms a contractile ring structure (Z ring) at the future cell division site. The regulation of the ring assembly controls the timing and the location of cell division. One of the functions of the FtsZ ring is to recruit other cell division proteins to the septum to produce a new cell wall between the dividing cells. Binds GTP and shows GTPase activity. The polypeptide is Cell division protein FtsZ (Helicobacter pylori (strain ATCC 700392 / 26695) (Campylobacter pylori)).